The sequence spans 307 residues: Thymidylate synthase (307 aa).

DUMP contacts are provided by residues R26 and 160–161 (RR). The active-site Nucleophile is the C180. Residues 209 to 212 (RSCD), N220, and 250 to 252 (HIY) contribute to the dUMP site. Residue D212 coordinates (6R)-5,10-methylene-5,6,7,8-tetrahydrofolate. Residue A306 participates in (6R)-5,10-methylene-5,6,7,8-tetrahydrofolate binding.

It belongs to the thymidylate synthase family. Bacterial-type ThyA subfamily. As to quaternary structure, homodimer.

The protein resides in the cytoplasm. It catalyses the reaction dUMP + (6R)-5,10-methylene-5,6,7,8-tetrahydrofolate = 7,8-dihydrofolate + dTMP. It functions in the pathway pyrimidine metabolism; dTTP biosynthesis. In terms of biological role, catalyzes the reductive methylation of 2'-deoxyuridine-5'-monophosphate (dUMP) to 2'-deoxythymidine-5'-monophosphate (dTMP) while utilizing 5,10-methylenetetrahydrofolate (mTHF) as the methyl donor and reductant in the reaction, yielding dihydrofolate (DHF) as a by-product. This enzymatic reaction provides an intracellular de novo source of dTMP, an essential precursor for DNA biosynthesis. This chain is Thymidylate synthase, found in Rhizobium rhizogenes (strain K84 / ATCC BAA-868) (Agrobacterium radiobacter).